The sequence spans 135 residues: Agouti-signaling protein (135 aa).

The N-terminal stretch at 1–22 (MNILRLLLATLLVCLCLLTAYS) is a signal peptide. A glycan (N-linked (GlcNAc...) asparagine) is linked at N39. The interval 56–101 (NKKSKKISRKEAEKKRSSKKKASMKNVAQPRRPRPPPPAPCVATRD) is disordered. 5 disulfide bridges follow: C96/C111, C103/C117, C110/C128, C114/C135, and C119/C126. The region spanning 96 to 135 (CVATRDSCKPPAPACCDPCASCQCRFFRSSCSCRVLNPTC) is the Agouti domain.

Its subcellular location is the secreted. In terms of biological role, involved in the regulation of melanogenesis. The binding of ASP to MC1R precludes alpha-MSH initiated signaling and thus blocks production of cAMP, leading to a down-regulation of eumelanogenesis (brown/black pigment) and thus increasing synthesis of pheomelanin (yellow/red pigment). This is Agouti-signaling protein (ASIP) from Felis catus (Cat).